Reading from the N-terminus, the 424-residue chain is CinA-like protein (424 aa).

It belongs to the CinA family.

This chain is CinA-like protein, found in Shewanella baltica (strain OS155 / ATCC BAA-1091).